The chain runs to 754 residues: Phosphoinositide 3-kinase regulatory subunit 6 (754 aa).

Positions 343–363 (ERDLPTGADELPAPGSPEMER) are disordered.

Heterodimer of a catalytic subunit (PIK3CG) and a regulatory (PIK3R6) subunit. The binding of PIK3R6 to PIK3CG may exclude the binding of PIK3R5 to PIK3CG. Interacts with beta-gamma G protein dimers. Interacts with PDE3B and RAPGEF3; form a signaling complex that regulates phosphatidylinositol 3-kinase gamma in angiogenesis.

It is found in the cytoplasm. It localises to the cell membrane. Functionally, regulatory subunit of the PI3K gamma complex. Acts as an adapter to drive activation of PIK3CG by beta-gamma G protein dimers. The PIK3CG:PIK3R6 heterodimer is much less sensitive to beta-gamma G protein dimers than PIK3CG:PIK3R5 and its membrane recruitment and beta-gamma G protein dimer-dependent activation requires HRAS bound to PIK3CG. Recruits of the PI3K gamma complex to a PDE3B:RAPGEF3 signaling complex involved in angiogenesis; signaling seems to involve RRAS. This is Phosphoinositide 3-kinase regulatory subunit 6 (PIK3R6) from Homo sapiens (Human).